The primary structure comprises 639 residues: CTTNBP2 N-terminal-like protein (639 aa).

Residues Met87–Ser285 are a coiled coil. A phosphoserine mark is found at Ser284 and Ser285. Disordered stretches follow at residues Val387–Ser430, Arg463–Thr490, and Arg511–Leu609. Low complexity-rich tracts occupy residues Pro405–Ser430 and Gln467–Ser477. Ser481, Ser488, Ser523, Ser527, Ser560, Ser563, and Ser568 each carry phosphoserine. Residues Arg511–Phe529 are compositionally biased toward polar residues. Residues Thr570 and Thr590 each carry the phosphothreonine modification. Positions Pro587–Thr600 are enriched in low complexity. Residue Ser592 is modified to Phosphoserine.

As to quaternary structure, interacts with CTTN/cortactin; this interaction may redistribute CTTN to stress fibers. May form homomers. Associates with the core of STRIPAK complexes composed of PP2A catalytic and scaffolding subunits, the striatins (PP2A regulatory subunits), the striatin-associated proteins MOB4, STRIP1 and STRIP2, PDCD10 and members of the STE20 kinases, such as STK24 and STK26.

The protein localises to the cell projection. Its subcellular location is the lamellipodium. It is found in the cytoplasm. The protein resides in the cytoskeleton. It localises to the stress fiber. Functionally, regulates lamellipodial actin dynamics in a CTTN-dependent manner. Associates with core striatin-interacting phosphatase and kinase (STRIPAK) complex to form CTTNBP2NL-STRIPAK complexes. STRIPAK complexes have critical roles in protein (de)phosphorylation and are regulators of multiple signaling pathways including Hippo, MAPK, nuclear receptor and cytoskeleton remodeling. Different types of STRIPAK complexes are involved in a variety of biological processes such as cell growth, differentiation, apoptosis, metabolism and immune regulation. The polypeptide is CTTNBP2 N-terminal-like protein (Homo sapiens (Human)).